The sequence spans 357 residues: RNA-binding protein 4B (357 aa).

RRM domains lie at 2 to 72 and 78 to 148; these read VKLF…ASKN and TKLH…LSTS. Residues 160–177 form a CCHC-type zinc finger; sequence SGCYRCGKEGHWSKECPV. The interaction with TNPO3 stretch occupies residues 196 to 357; the sequence is AVRTPYTMGY…YVDRTRYSAF (162 aa).

Interacts with TNPO3, which may mediate nuclear import of the protein. Expressed in the suprachiasmatic nucleus (SCN) (at protein level). Expressed in the suprachiasmatic nucleus (SCN).

It localises to the nucleus. Its subcellular location is the nucleolus. Its function is as follows. Required for the translational activation of PER1 mRNA in response to circadian clock. Binds directly to the 3'-UTR of the PER1 mRNA. The protein is RNA-binding protein 4B (Rbm4b) of Mus musculus (Mouse).